The following is a 117-amino-acid chain: Aspartate 1-decarboxylase (117 aa).

The active-site Schiff-base intermediate with substrate; via pyruvic acid is the serine 25. Residue serine 25 is modified to Pyruvic acid (Ser). Threonine 57 is a substrate binding site. Tyrosine 58 acts as the Proton donor in catalysis. Position 73–75 (73–75 (GAA)) interacts with substrate.

It belongs to the PanD family. As to quaternary structure, heterooctamer of four alpha and four beta subunits. Pyruvate is required as a cofactor. In terms of processing, is synthesized initially as an inactive proenzyme, which is activated by self-cleavage at a specific serine bond to produce a beta-subunit with a hydroxyl group at its C-terminus and an alpha-subunit with a pyruvoyl group at its N-terminus.

The protein localises to the cytoplasm. The enzyme catalyses L-aspartate + H(+) = beta-alanine + CO2. The protein operates within cofactor biosynthesis; (R)-pantothenate biosynthesis; beta-alanine from L-aspartate: step 1/1. In terms of biological role, catalyzes the pyruvoyl-dependent decarboxylation of aspartate to produce beta-alanine. The protein is Aspartate 1-decarboxylase of Bacteroides thetaiotaomicron (strain ATCC 29148 / DSM 2079 / JCM 5827 / CCUG 10774 / NCTC 10582 / VPI-5482 / E50).